A 508-amino-acid chain; its full sequence is UDP-N-acetylmuramoyl-L-alanyl-D-glutamate--2,6-diaminopimelate ligase (508 aa).

Serine 29 contacts UDP-N-acetyl-alpha-D-muramoyl-L-alanyl-D-glutamate. 112-118 (GTNGKTS) is a binding site for ATP. Residues 159 to 160 (TT), serine 186, glutamine 192, and arginine 194 each bind UDP-N-acetyl-alpha-D-muramoyl-L-alanyl-D-glutamate. At lysine 226 the chain carries N6-carboxylysine. Residues arginine 398, 421–424 (DNPR), glycine 473, and glutamate 477 contribute to the meso-2,6-diaminopimelate site. Residues 421 to 424 (DNPR) carry the Meso-diaminopimelate recognition motif motif.

The protein belongs to the MurCDEF family. MurE subfamily. Mg(2+) serves as cofactor. Post-translationally, carboxylation is probably crucial for Mg(2+) binding and, consequently, for the gamma-phosphate positioning of ATP.

It localises to the cytoplasm. The catalysed reaction is UDP-N-acetyl-alpha-D-muramoyl-L-alanyl-D-glutamate + meso-2,6-diaminopimelate + ATP = UDP-N-acetyl-alpha-D-muramoyl-L-alanyl-gamma-D-glutamyl-meso-2,6-diaminopimelate + ADP + phosphate + H(+). Its pathway is cell wall biogenesis; peptidoglycan biosynthesis. Catalyzes the addition of meso-diaminopimelic acid to the nucleotide precursor UDP-N-acetylmuramoyl-L-alanyl-D-glutamate (UMAG) in the biosynthesis of bacterial cell-wall peptidoglycan. This chain is UDP-N-acetylmuramoyl-L-alanyl-D-glutamate--2,6-diaminopimelate ligase, found in Janthinobacterium sp. (strain Marseille) (Minibacterium massiliensis).